The chain runs to 285 residues: Pantothenate synthetase (285 aa).

An ATP-binding site is contributed by 30–37 (MGFLHEGH). His-37 serves as the catalytic Proton donor. Gln-61 provides a ligand contact to (R)-pantoate. Gln-61 is a binding site for beta-alanine. Position 147–150 (147–150 (GQKD)) interacts with ATP. Residue Gln-153 participates in (R)-pantoate binding. Residues Val-176 and 184 to 187 (KSSR) contribute to the ATP site.

This sequence belongs to the pantothenate synthetase family. In terms of assembly, homodimer.

The protein resides in the cytoplasm. The catalysed reaction is (R)-pantoate + beta-alanine + ATP = (R)-pantothenate + AMP + diphosphate + H(+). The protein operates within cofactor biosynthesis; (R)-pantothenate biosynthesis; (R)-pantothenate from (R)-pantoate and beta-alanine: step 1/1. In terms of biological role, catalyzes the condensation of pantoate with beta-alanine in an ATP-dependent reaction via a pantoyl-adenylate intermediate. The sequence is that of Pantothenate synthetase from Listeria monocytogenes serovar 1/2a (strain ATCC BAA-679 / EGD-e).